Reading from the N-terminus, the 284-residue chain is Ubiquitin thioesterase otubain-like (284 aa).

The OTU domain maps to 77-274 (GEIRYIRGDG…PGHYDVIYKK (198 aa)). Asp85 is a catalytic residue. Cys88 acts as the Nucleophile in catalysis. Ile176 lines the substrate pocket. Residues His245 and His267 contribute to the active site.

Belongs to the peptidase C65 family.

It catalyses the reaction Thiol-dependent hydrolysis of ester, thioester, amide, peptide and isopeptide bonds formed by the C-terminal Gly of ubiquitin (a 76-residue protein attached to proteins as an intracellular targeting signal).. Functionally, hydrolase that can remove conjugated ubiquitin from proteins and plays an important regulatory role at the level of protein turnover by preventing degradation. Specifically cleaves 'Lys-48'-linked polyubiquitin. This chain is Ubiquitin thioesterase otubain-like (otub-1), found in Caenorhabditis elegans.